The sequence spans 482 residues: High affinity 3',5'-cyclic-AMP phosphodiesterase 7A (482 aa).

Serine 84 bears the Phosphoserine mark. The 323-residue stretch at 136–458 (LDDDYNGQAK…ASWKGLQREQ (323 aa)) folds into the PDEase domain. Histidine 212 (proton donor) is an active-site residue. A divalent metal cation contacts are provided by histidine 216, histidine 252, aspartate 253, and aspartate 362.

Belongs to the cyclic nucleotide phosphodiesterase family. PDE7 subfamily. Interacts with CBFA2T3. A divalent metal cation is required as a cofactor. In terms of tissue distribution, found at high levels in skeletal muscle and at low levels in a variety of tissues including brain and heart. It is expressed as well in two T-cell lines. As to expression, found abundantly in skeletal muscle and at low levels in heart.

It localises to the cytoplasm. Its subcellular location is the cytosol. It catalyses the reaction 3',5'-cyclic AMP + H2O = AMP + H(+). Its pathway is purine metabolism; 3',5'-cyclic AMP degradation; AMP from 3',5'-cyclic AMP: step 1/1. Insensitive to all selective PDE inhibitors. In terms of biological role, hydrolyzes the second messenger cAMP, which is a key regulator of many important physiological processes. May have a role in muscle signal transduction. The sequence is that of High affinity 3',5'-cyclic-AMP phosphodiesterase 7A from Homo sapiens (Human).